The sequence spans 149 residues: MTRKQKRLAVIAGGVGFIMVAVLLVLFAFGQSIAYFYMPSDLAKTPVGPGTRIRLGGLVAEGSVKRDTGSTVSFAVTDGTATVPVTYTGILPDLFREGQGVVTEGVFGAGGTLFDADTVLAKHDENYMPKEVADRMKKDGVWKGEGEAK.

At 1–7 the chain is on the cytoplasmic side; sequence MTRKQKR. Residues 8-28 form a helical; Signal-anchor for type II membrane protein membrane-spanning segment; that stretch reads LAVIAGGVGFIMVAVLLVLFA. At 29–149 the chain is on the periplasmic side; that stretch reads FGQSIAYFYM…GVWKGEGEAK (121 aa). Positions 123 and 127 each coordinate heme.

This sequence belongs to the CcmE/CycJ family.

It localises to the cell inner membrane. Its function is as follows. Heme chaperone required for the biogenesis of c-type cytochromes. Transiently binds heme delivered by CcmC and transfers the heme to apo-cytochromes in a process facilitated by CcmF and CcmH. The polypeptide is Cytochrome c-type biogenesis protein CcmE (Allorhizobium ampelinum (strain ATCC BAA-846 / DSM 112012 / S4) (Agrobacterium vitis (strain S4))).